A 232-amino-acid polypeptide reads, in one-letter code: 7-cyano-7-deazaguanine synthase (232 aa).

13–23 (LSGGLDSATVL) lines the ATP pocket. 4 residues coordinate Zn(2+): Cys194, Cys204, Cys207, and Cys210.

Belongs to the QueC family. Zn(2+) serves as cofactor.

It catalyses the reaction 7-carboxy-7-deazaguanine + NH4(+) + ATP = 7-cyano-7-deazaguanine + ADP + phosphate + H2O + H(+). It participates in purine metabolism; 7-cyano-7-deazaguanine biosynthesis. Functionally, catalyzes the ATP-dependent conversion of 7-carboxy-7-deazaguanine (CDG) to 7-cyano-7-deazaguanine (preQ(0)). In Hydrogenovibrio crunogenus (strain DSM 25203 / XCL-2) (Thiomicrospira crunogena), this protein is 7-cyano-7-deazaguanine synthase.